A 284-amino-acid polypeptide reads, in one-letter code: 2-dehydro-3-deoxyphosphooctonate aldolase (284 aa).

Belongs to the KdsA family.

It localises to the cytoplasm. The catalysed reaction is D-arabinose 5-phosphate + phosphoenolpyruvate + H2O = 3-deoxy-alpha-D-manno-2-octulosonate-8-phosphate + phosphate. It functions in the pathway carbohydrate biosynthesis; 3-deoxy-D-manno-octulosonate biosynthesis; 3-deoxy-D-manno-octulosonate from D-ribulose 5-phosphate: step 2/3. It participates in bacterial outer membrane biogenesis; lipopolysaccharide biosynthesis. In Sodalis glossinidius (strain morsitans), this protein is 2-dehydro-3-deoxyphosphooctonate aldolase.